We begin with the raw amino-acid sequence, 89 residues long: Dynein light chain LC6, flagellar outer arm (89 aa).

It belongs to the dynein light chain family. In terms of assembly, consists of at least 3 heavy chains (alpha, beta and gamma), 2 intermediate chains and 8 light chains.

The protein resides in the cytoplasm. It localises to the cytoskeleton. It is found in the flagellum axoneme. The sequence is that of Dynein light chain LC6, flagellar outer arm from Heliocidaris crassispina (Sea urchin).